We begin with the raw amino-acid sequence, 202 residues long: LexA repressor (202 aa).

Residues 28 to 48 (RAEIAQRLGFRSPNAAEEHLK) constitute a DNA-binding region (H-T-H motif). Catalysis depends on for autocatalytic cleavage activity residues serine 119 and lysine 156.

This sequence belongs to the peptidase S24 family. As to quaternary structure, homodimer.

It catalyses the reaction Hydrolysis of Ala-|-Gly bond in repressor LexA.. Its function is as follows. Represses a number of genes involved in the response to DNA damage (SOS response), including recA and lexA. Binds to the 16 bp palindromic sequence 5'-CTGTATATATATACAG-3'. In the presence of single-stranded DNA, RecA interacts with LexA causing an autocatalytic cleavage which disrupts the DNA-binding part of LexA, leading to derepression of the SOS regulon and eventually DNA repair. In Escherichia fergusonii (strain ATCC 35469 / DSM 13698 / CCUG 18766 / IAM 14443 / JCM 21226 / LMG 7866 / NBRC 102419 / NCTC 12128 / CDC 0568-73), this protein is LexA repressor.